A 671-amino-acid polypeptide reads, in one-letter code: Kinesin-like protein KIF2C (671 aa).

A globular region spans residues 1 to 200 (MIDIDDVAAI…CNPLTVTDPI (200 aa)). A disordered region spans residues 37–58 (QKRKSVNSKIPGPKEGLRSRST). The residue at position 41 (Ser-41) is a Phosphoserine; by AURKB. The Microtubule tip localization signal signature appears at 44–47 (SKIP). Phosphoserine occurs at positions 55, 57, 61, 112, 121, 133, and 138. The tract at residues 115 to 138 (AEEQAHSTRSTSSANPGNSVRRKS) is disordered. The segment covering 121-132 (STRSTSSANPGN) has biased composition (polar residues). The tract at residues 153 to 184 (EKRAQNSEIRIKRAQEYDNSFPNWEFARMIKE) is negative regulator of microtubule-binding. Residues 204-534 (RICVCVRKRP…LRYADRVKEL (331 aa)) form the Kinesin motor domain. Residues Arg-210 and 294–301 (GQTGSGKT) each bind ATP. Residue Ser-465 is modified to Phosphoserine. Positions 533 to 568 (ELSPHSGPSGEQAVQMETEEMDASSHGASLTGNEEE) are disordered. Residues 566–601 (EEEELSSQMSSFNEAMTQIRELEERAMEELREIIQQ) adopt a coiled-coil conformation. Ser-576 is subject to Phosphoserine.

Belongs to the TRAFAC class myosin-kinesin ATPase superfamily. Kinesin family. MCAK/KIF2 subfamily. In terms of assembly, interacts with CENPH. Interacts with MTUS2/TIP150; the interaction is direct. Interacts with MAPRE1; the interaction is direct, regulated by phosphorylation and is probably required for targeting to growing microtubule plus ends. Interacts with KIF18B at microtubule tips; this interaction increases the affinity of both partners for microtubule plus ends and is required for robust microtubule depolymerization. Phosphorylation by AURKA or AURKB strongly reduces KIF18B-binding. Post-translationally, phosphorylation by AURKB, regulates association with centromeres and kinetochores and the microtubule depolymerization activity. Ubiquitinated. As to expression, testis. Localized to the meiotically active cells of the seminiferous epithelia in the testis.

The protein resides in the cytoplasm. It localises to the cytoskeleton. The protein localises to the nucleus. It is found in the chromosome. Its subcellular location is the centromere. The protein resides in the kinetochore. In complex with KIF18B, constitutes the major microtubule plus-end depolymerizing activity in mitotic cells. Regulates the turnover of microtubules at the kinetochore and functions in chromosome segregation during mitosis. Plays a role in chromosome congression and is required for the lateral to end-on conversion of the chromosome-microtubule attachment. This Rattus norvegicus (Rat) protein is Kinesin-like protein KIF2C (Kif2c).